Consider the following 277-residue polypeptide: Undecaprenyl-diphosphatase (277 aa).

The next 6 helical transmembrane spans lie at 88 to 108 (MGWL…LFQD), 117 to 137 (MWIV…ADAV), 157 to 179 (FAQA…AGLL), 191 to 211 (SFLL…YKVV), 227 to 247 (LATV…LKFV), and 255 to 275 (FVWY…FGVI).

It belongs to the UppP family.

Its subcellular location is the cell membrane. The enzyme catalyses di-trans,octa-cis-undecaprenyl diphosphate + H2O = di-trans,octa-cis-undecaprenyl phosphate + phosphate + H(+). Functionally, catalyzes the dephosphorylation of undecaprenyl diphosphate (UPP). Confers resistance to bacitracin. The sequence is that of Undecaprenyl-diphosphatase from Pseudarthrobacter chlorophenolicus (strain ATCC 700700 / DSM 12829 / CIP 107037 / JCM 12360 / KCTC 9906 / NCIMB 13794 / A6) (Arthrobacter chlorophenolicus).